The following is a 207-amino-acid chain: uncharacterized protein (207 aa).

5 helical membrane-spanning segments follow: residues 28–48 (IAVL…IVFV), 59–79 (EGFI…FLIV), 112–132 (MFLL…VAGL), 140–160 (FILA…FIGY), and 165–185 (LITQ…LWYV).

It is found in the cell membrane. This is an uncharacterized protein from Bacillus subtilis (strain 168).